We begin with the raw amino-acid sequence, 225 residues long: UPF0758 protein XAC3915 (225 aa).

The region spanning 102 to 224 (ALSDPPSVGR…PVSFAERGWL (123 aa)) is the MPN domain. Zn(2+) is bound by residues H173, H175, and D186. Positions 173-186 (HNHPSGNPEPSEAD) match the JAMM motif motif.

The protein belongs to the UPF0758 family.

The chain is UPF0758 protein XAC3915 from Xanthomonas axonopodis pv. citri (strain 306).